The sequence spans 189 residues: Accessory gene regulator protein B (189 aa).

5 consecutive transmembrane segments (helical) span residues 50–70 (VSLL…FFFI), 83–103 (LLCY…VGYV), 105–125 (VSSL…SIYA), 143–163 (KIKA…LNEP), and 164–184 (YQQL…PIFF).

It belongs to the AgrB family.

The protein resides in the cell membrane. Functionally, essential for the production of a quorum sensing system signal molecule, the autoinducing peptide (AIP). This quorum sensing system is responsible for the regulation of the expression of virulence factor genes. Involved in the proteolytic processing of AgrD, the precursor of AIP. The polypeptide is Accessory gene regulator protein B (Staphylococcus saprophyticus subsp. saprophyticus (strain ATCC 15305 / DSM 20229 / NCIMB 8711 / NCTC 7292 / S-41)).